Here is a 249-residue protein sequence, read N- to C-terminus: MDNLNVFANEDNQVNDVKPPPPPPRVCARCDSDNTKFCYYNNYCEFQPRYFCKNCRRYWTHGGALRNIPIGGSSRAKRARVNQPSVARMVSVETQRGNNQPFSNVQENVHLVGSFGASSSSSVGAVGNLFGSLYDIHGGMVTNLHPTRTVRPNHRLAFHDGSFEQDYYDVGSDNLLVNQQVGGYGYHMNPVDQFKWNQSFNNTMNMNYNNDSTSGSSRGSDMNVNHDNKKIRYRNSVIMHPCHLEKDGP.

The segment at 25–79 (RVCARCDSDNTKFCYYNNYCEFQPRYFCKNCRRYWTHGGALRNIPIGGSSRAKRA) adopts a Dof-type zinc-finger fold. Cys27, Cys30, Cys52, and Cys55 together coordinate Zn(2+).

The protein resides in the nucleus. Its function is as follows. Transcription factor that binds specifically to a 5'-AA[AG]G-3' consensus core sequence. This Arabidopsis thaliana (Mouse-ear cress) protein is Dof zinc finger protein DOF4.5 (DOF4.5).